We begin with the raw amino-acid sequence, 193 residues long: AP-3 complex subunit sigma-1 (193 aa).

Ser191 bears the Phosphoserine mark.

It belongs to the adaptor complexes small subunit family. As to quaternary structure, adaptor protein complex 3 (AP-3) is a heterotetramer composed of two large adaptins (delta-type subunit AP3D1 and beta-type subunit AP3B1 or AP3B2), a medium adaptin (mu-type subunit AP3M1 or AP3M2) and a small adaptin (sigma-type subunit APS1 or AP3S2). Interacts with AGAP1. AP-3 associates with the BLOC-1 complex.

Its subcellular location is the golgi apparatus. It is found in the cytoplasmic vesicle membrane. Its function is as follows. Part of the AP-3 complex, an adaptor-related complex which is not clathrin-associated. The complex is associated with the Golgi region as well as more peripheral structures. It facilitates the budding of vesicles from the Golgi membrane and may be directly involved in trafficking to lysosomes. In concert with the BLOC-1 complex, AP-3 is required to target cargos into vesicles assembled at cell bodies for delivery into neurites and nerve terminals. This is AP-3 complex subunit sigma-1 (AP3S1) from Bos taurus (Bovine).